Reading from the N-terminus, the 444-residue chain is Phosphoglucosamine mutase (444 aa).

The Phosphoserine intermediate role is filled by S102. Residues S102, D241, D243, and D245 each coordinate Mg(2+). At S102 the chain carries Phosphoserine.

This sequence belongs to the phosphohexose mutase family. Mg(2+) serves as cofactor. Activated by phosphorylation.

It catalyses the reaction alpha-D-glucosamine 1-phosphate = D-glucosamine 6-phosphate. Functionally, catalyzes the conversion of glucosamine-6-phosphate to glucosamine-1-phosphate. The sequence is that of Phosphoglucosamine mutase from Histophilus somni (strain 129Pt) (Haemophilus somnus).